The primary structure comprises 364 residues: Valine dehydrogenase (364 aa).

Lysine 91 is an active-site residue. NAD(+) is bound at residue 191–197; it reads GVGKVGH.

Belongs to the Glu/Leu/Phe/Val dehydrogenases family. Homodimer.

The protein localises to the cytoplasm. It carries out the reaction L-valine + NAD(+) + H2O = 3-methyl-2-oxobutanoate + NH4(+) + NADH + H(+). It participates in amino-acid degradation; L-valine degradation. With respect to regulation, inhibited by pyridoxal 5'-phosphate (PLP). Oxidative deamination of branched-chain amino acids. Oxidizes L-valine and L-alpha-aminobutyric acid efficiently, and L-alanine and L-isoleucine less efficiently. D-valine and L-glutamate were not substrates for the enzyme. The catabolism of valine is the major source of fatty acid precursors for macrolide biosynthesis and a vital source of antibiotic precursors. In Streptomyces albus (strain ATCC 21838 / DSM 41398 / FERM P-419 / JCM 4703 / NBRC 107858), this protein is Valine dehydrogenase.